The sequence spans 314 residues: Aspartate carbamoyltransferase catalytic subunit (314 aa).

Residues Arg-58 and Thr-59 each contribute to the carbamoyl phosphate site. An L-aspartate-binding site is contributed by Lys-86. Carbamoyl phosphate contacts are provided by Arg-108, His-136, and Gln-139. The L-aspartate site is built by Arg-169 and Arg-223. Carbamoyl phosphate-binding residues include Gly-264 and Pro-265.

It belongs to the aspartate/ornithine carbamoyltransferase superfamily. ATCase family. In terms of assembly, heterododecamer (2C3:3R2) of six catalytic PyrB chains organized as two trimers (C3), and six regulatory PyrI chains organized as three dimers (R2).

It carries out the reaction carbamoyl phosphate + L-aspartate = N-carbamoyl-L-aspartate + phosphate + H(+). The protein operates within pyrimidine metabolism; UMP biosynthesis via de novo pathway; (S)-dihydroorotate from bicarbonate: step 2/3. Its function is as follows. Catalyzes the condensation of carbamoyl phosphate and aspartate to form carbamoyl aspartate and inorganic phosphate, the committed step in the de novo pyrimidine nucleotide biosynthesis pathway. This chain is Aspartate carbamoyltransferase catalytic subunit, found in Opitutus terrae (strain DSM 11246 / JCM 15787 / PB90-1).